The following is a 284-amino-acid chain: Acetyl-coenzyme A carboxylase carboxyl transferase subunit beta (284 aa).

The CoA carboxyltransferase N-terminal domain occupies 25-284 (LWTKCPKCES…ICRMLLQKSA (260 aa)). Residues C29, C32, C48, and C51 each coordinate Zn(2+). The segment at 29-51 (CPKCESTLYRAEVRRNLEVCPKC) adopts a C4-type zinc-finger fold.

This sequence belongs to the AccD/PCCB family. As to quaternary structure, acetyl-CoA carboxylase is a heterohexamer composed of biotin carboxyl carrier protein (AccB), biotin carboxylase (AccC) and two subunits each of ACCase subunit alpha (AccA) and ACCase subunit beta (AccD). Requires Zn(2+) as cofactor.

It localises to the cytoplasm. The catalysed reaction is N(6)-carboxybiotinyl-L-lysyl-[protein] + acetyl-CoA = N(6)-biotinyl-L-lysyl-[protein] + malonyl-CoA. It functions in the pathway lipid metabolism; malonyl-CoA biosynthesis; malonyl-CoA from acetyl-CoA: step 1/1. Its function is as follows. Component of the acetyl coenzyme A carboxylase (ACC) complex. Biotin carboxylase (BC) catalyzes the carboxylation of biotin on its carrier protein (BCCP) and then the CO(2) group is transferred by the transcarboxylase to acetyl-CoA to form malonyl-CoA. This Hydrogenovibrio crunogenus (strain DSM 25203 / XCL-2) (Thiomicrospira crunogena) protein is Acetyl-coenzyme A carboxylase carboxyl transferase subunit beta.